Consider the following 380-residue polypeptide: Probable peptidoglycan glycosyltransferase FtsW (380 aa).

A run of 10 helical transmembrane segments spans residues 14–34 (LLWC…SSSI), 52–72 (ILYL…PISF), 79–99 (IILL…NSIH), 112–131 (MQPS…NYLS), 141–161 (FGGF…LLVE), 162–182 (PDLG…FISG), 188–208 (FIPT…KSPY), 268–288 (IIGE…IFFI), 304–324 (IFFS…QTLI), and 341–361 (PLIS…IILI).

Belongs to the SEDS family. FtsW subfamily.

Its subcellular location is the cell membrane. It catalyses the reaction [GlcNAc-(1-&gt;4)-Mur2Ac(oyl-L-Ala-gamma-D-Glu-L-Lys-D-Ala-D-Ala)](n)-di-trans,octa-cis-undecaprenyl diphosphate + beta-D-GlcNAc-(1-&gt;4)-Mur2Ac(oyl-L-Ala-gamma-D-Glu-L-Lys-D-Ala-D-Ala)-di-trans,octa-cis-undecaprenyl diphosphate = [GlcNAc-(1-&gt;4)-Mur2Ac(oyl-L-Ala-gamma-D-Glu-L-Lys-D-Ala-D-Ala)](n+1)-di-trans,octa-cis-undecaprenyl diphosphate + di-trans,octa-cis-undecaprenyl diphosphate + H(+). The protein operates within cell wall biogenesis; peptidoglycan biosynthesis. Peptidoglycan polymerase that is essential for cell division. The sequence is that of Probable peptidoglycan glycosyltransferase FtsW from Buchnera aphidicola subsp. Baizongia pistaciae (strain Bp).